We begin with the raw amino-acid sequence, 557 residues long: D-arabinono-1,4-lactone oxidase (557 aa).

The FAD-binding PCMH-type domain occupies 26-209 (FFCKPQAIFQ…THVTLRTIPK (184 aa)). Position 63 is a pros-8alpha-FAD histidine (H63).

Belongs to the oxygen-dependent FAD-linked oxidoreductase family. Requires FAD as cofactor.

It localises to the mitochondrion membrane. It catalyses the reaction D-arabinono-1,4-lactone + O2 = dehydro-D-arabinono-1,4-lactone + H2O2 + H(+). Its pathway is cofactor biosynthesis; D-erythroascorbate biosynthesis; dehydro-D-arabinono-1,4-lactone from D-arabinose: step 2/2. This Debaryomyces hansenii (strain ATCC 36239 / CBS 767 / BCRC 21394 / JCM 1990 / NBRC 0083 / IGC 2968) (Yeast) protein is D-arabinono-1,4-lactone oxidase (ALO1).